The following is a 378-amino-acid chain: L-lactate dehydrogenase (378 aa).

The FMN hydroxy acid dehydrogenase domain occupies 1 to 378 (MIISASTDYR…ELSRDSLVKR (378 aa)). Tyr24 is a substrate binding site. The FMN site is built by Ser106 and Gln127. Substrate is bound at residue Tyr129. An FMN-binding site is contributed by Thr155. Arg164 is a substrate binding site. Residue Lys251 participates in FMN binding. His275 acts as the Proton acceptor in catalysis. Arg278 provides a ligand contact to substrate. 306–330 (DSGIRTGLDVVRMLALGADCTMLGR) contacts FMN.

This sequence belongs to the FMN-dependent alpha-hydroxy acid dehydrogenase family. FMN serves as cofactor.

Its subcellular location is the cell inner membrane. It carries out the reaction (S)-lactate + A = pyruvate + AH2. Catalyzes the conversion of L-lactate to pyruvate. Is coupled to the respiratory chain. The protein is L-lactate dehydrogenase of Vibrio cholerae serotype O1 (strain ATCC 39315 / El Tor Inaba N16961).